Reading from the N-terminus, the 312-residue chain is MKVAVLGAAGGIGQALALLLKTQLPSGSELSLYDIAPVTPGVAVDLSHIPTEVKIKGFAGEDATPALEGANVVLISAGVARKPGMDRSDLFNINAGIVRNLVEQVAKTCPKSLIGIITNPVNTTVAIAAEVLKKAGVYDKNRLFGVTTLDVIRSNTFVAELKGKKPQEIEVPVIGGHSGVTILPLLSQIPGVNFTDGELAALTKRIQNAGTEVVEAKAGGGSATLSMGQAAARLGLSLVRGLQGESDVVECAYVEGDGKYARFFAQPVRLGKNGVEERLNIGELSDFEQKALEGMLDVLRKDIELGEKFINN.

Residues 7–13 and Asp-34 contribute to the NAD(+) site; that span reads GAAGGIG. Substrate-binding residues include Arg-81 and Arg-87. NAD(+) is bound by residues Asn-94 and 117–119; that span reads ITN. Residues Asn-119 and Arg-153 each coordinate substrate. The Proton acceptor role is filled by His-177. Residue Met-227 participates in NAD(+) binding.

Belongs to the LDH/MDH superfamily. MDH type 1 family. In terms of assembly, homodimer.

It carries out the reaction (S)-malate + NAD(+) = oxaloacetate + NADH + H(+). In terms of biological role, catalyzes the reversible oxidation of malate to oxaloacetate. This is Malate dehydrogenase from Photorhabdus laumondii subsp. laumondii (strain DSM 15139 / CIP 105565 / TT01) (Photorhabdus luminescens subsp. laumondii).